A 736-amino-acid polypeptide reads, in one-letter code: MEIGTEISRKIRSAIKGKLQELGAYVDEELPDYIMVMVANKKSQDQMTEDLSLFLGNNTIRFTVWLHGVLDKLRSVTTEPSSLKSSDTNIFDSNVPSNKSNFSRGDERRHEAAVPPLAIPSTRPEKRDSRVSTSSQESKTTNVRQTYDDGAATRLMSTVKPLREPAPSEDVIDIKPEPDDLIDEDLNFVQENPLSQKKPTVTLTYGSSRPSIEIYRPPASRNADSGVHLNRLQFQQQQNSIHAAKQLDMQNSWVYETGRLCEPEVLNSLEETYSPFFRNNSEKMSMEDENFRKRKLPVVSSVVKVKKFNHDGEEEEEDDDYGSRTGSISSSVSVPAKPERRPSLPPSKQANKNLILKAISEAQESVTKTTNYSTVPQKQTLPVAPRTRTSQEELLAEVVQGQSRTPRISPPIKEEETKGDSVEKNQGTQQRQLLSRLQIDPVMAETLQMSQDYYDMESMVHADTRSFILKKPKLSEEIVVAPNQESGMKTADSLRVLSGHLMQTRDLVQPDKPASPKFIVTLDGVPSPPGYMSDQEEDMCFEGMKPVNQTAASNKGLRGLLHPQQLHLLSRQLEDPNGSFSNAEMSELSVAQKPEKLLERCKYWPACKNGDECAYHHPISPCKAFPNCKFAEKCLFVHPNCKYDAKCTKPDCPFTHVSRRIPVLSPKPAVAPPAPPSSSQLCRYFPACKKMECPFYHPKHCRFNTQCTRPDCTFYHPTINVPPRHALKWIRPQTSE.

Residue Met-1 is modified to N-acetylmethionine. Polar residues-rich tracts occupy residues 78-103 (TEPSSLKSSDTNIFDSNVPSNKSNFS) and 131-145 (VSTSSQESKTTNVRQ). Positions 78–146 (TEPSSLKSSD…ESKTTNVRQT (69 aa)) are disordered. Position 85 is a phosphoserine (Ser-85). Glycyl lysine isopeptide (Lys-Gly) (interchain with G-Cter in SUMO2) cross-links involve residues Lys-99, Lys-139, Lys-175, and Lys-198. Phosphoserine is present on Ser-240. Lys-245 is covalently cross-linked (Glycyl lysine isopeptide (Lys-Gly) (interchain with G-Cter in SUMO2)). The residue at position 281 (Ser-281) is a Phosphoserine. Glycyl lysine isopeptide (Lys-Gly) (interchain with G-Cter in SUMO2) cross-links involve residues Lys-283 and Lys-295. The interval 310 to 350 (HDGEEEEEDDDYGSRTGSISSSVSVPAKPERRPSLPPSKQA) is disordered. Phosphoserine is present on residues Ser-327 and Ser-343. The residue at position 357 (Lys-357) is an N6-acetyllysine; alternate. Lys-357 participates in a covalent cross-link: Glycyl lysine isopeptide (Lys-Gly) (interchain with G-Cter in SUMO2); alternate. Lys-378 participates in a covalent cross-link: Glycyl lysine isopeptide (Lys-Gly) (interchain with G-Cter in SUMO2). Phosphoserine occurs at positions 390 and 409. Residues 398–430 (VVQGQSRTPRISPPIKEEETKGDSVEKNQGTQQ) are disordered. Residues 412 to 423 (IKEEETKGDSVE) are compositionally biased toward basic and acidic residues. Residue Lys-413 forms a Glycyl lysine isopeptide (Lys-Gly) (interchain with G-Cter in SUMO2) linkage. The residue at position 421 (Ser-421) is a Phosphoserine. Residue Lys-489 forms a Glycyl lysine isopeptide (Lys-Gly) (interchain with G-Cter in SUMO2) linkage. 4 positions are modified to phosphoserine: Ser-498, Ser-515, Ser-527, and Ser-620. C3H1-type zinc fingers lie at residues 595–620 (EKLLERCKYWPACKNGDECAYHHPIS), 621–640 (PCKAFPNCKFAEKCLFVHPN), 641–656 (CKYDAKCTKPDCPFTH), 682–699 (CRYFPACKKMECPFYHPK), and 701–719 (CRFNTQCTRPDCTFYHPTI).

Belongs to the ZC3H14 family. Homodimer; facilitating circular RNAs (circRNAs) formation. Associates with the spliceosome. Interacts with HOOK2. Interacts with ZFC3H1 in a RNase-sensitive manner.

It localises to the nucleus speckle. In terms of biological role, RNA-binding protein involved in the biogenesis of circular RNAs (circRNAs), which are produced by back-splicing circularization of pre-mRNAs. Acts by binding to both exon-intron boundary and 3'-UTR of pre-mRNAs to promote circRNA biogenesis through dimerization and the association with the spliceosome. Required for spermatogenesis via involvement in circRNA biogenesis. Regulates the pre-mRNA processing of ATP5MC1; preventing its degradation. Also binds the poly(A) tail of mRNAs; controlling poly(A) length in neuronal cells. This is Zinc finger CCCH domain-containing protein 14 (ZC3H14) from Macaca fascicularis (Crab-eating macaque).